The primary structure comprises 111 residues: Large ribosomal subunit protein uL22 (111 aa).

Belongs to the universal ribosomal protein uL22 family. As to quaternary structure, part of the 50S ribosomal subunit.

Functionally, this protein binds specifically to 23S rRNA; its binding is stimulated by other ribosomal proteins, e.g. L4, L17, and L20. It is important during the early stages of 50S assembly. It makes multiple contacts with different domains of the 23S rRNA in the assembled 50S subunit and ribosome. The globular domain of the protein is located near the polypeptide exit tunnel on the outside of the subunit, while an extended beta-hairpin is found that lines the wall of the exit tunnel in the center of the 70S ribosome. The polypeptide is Large ribosomal subunit protein uL22 (Geobacter sulfurreducens (strain ATCC 51573 / DSM 12127 / PCA)).